Reading from the N-terminus, the 156-residue chain is Small ribosomal subunit protein uS7 (156 aa).

The protein belongs to the universal ribosomal protein uS7 family. In terms of assembly, part of the 30S ribosomal subunit. Contacts proteins S9 and S11.

One of the primary rRNA binding proteins, it binds directly to 16S rRNA where it nucleates assembly of the head domain of the 30S subunit. Is located at the subunit interface close to the decoding center, probably blocks exit of the E-site tRNA. This Leifsonia xyli subsp. xyli (strain CTCB07) protein is Small ribosomal subunit protein uS7.